The primary structure comprises 566 residues: Proline--tRNA ligase 1 (566 aa).

The protein belongs to the class-II aminoacyl-tRNA synthetase family. ProS type 1 subfamily. As to quaternary structure, homodimer.

The protein resides in the cytoplasm. The catalysed reaction is tRNA(Pro) + L-proline + ATP = L-prolyl-tRNA(Pro) + AMP + diphosphate. Functionally, catalyzes the attachment of proline to tRNA(Pro) in a two-step reaction: proline is first activated by ATP to form Pro-AMP and then transferred to the acceptor end of tRNA(Pro). As ProRS can inadvertently accommodate and process non-cognate amino acids such as alanine and cysteine, to avoid such errors it has two additional distinct editing activities against alanine. One activity is designated as 'pretransfer' editing and involves the tRNA(Pro)-independent hydrolysis of activated Ala-AMP. The other activity is designated 'posttransfer' editing and involves deacylation of mischarged Ala-tRNA(Pro). The misacylated Cys-tRNA(Pro) is not edited by ProRS. This is Proline--tRNA ligase 1 from Bacillus cereus (strain ZK / E33L).